The chain runs to 148 residues: Calmodulin-related protein 97A (148 aa).

4 consecutive EF-hand domains span residues 7-42 (EQIA…LGQN), 43-78 (PTEA…QMRE), 80-115 (DTEE…LGEK), and 116-148 (VTDE…ISQK). Ca(2+)-binding residues include aspartate 20, threonine 24, lysine 26, glutamate 31, asparagine 58, asparagine 60, glutamine 62, glutamate 67, aspartate 93, aspartate 95, aspartate 97, glutamate 104, aspartate 129, aspartate 131, aspartate 133, methionine 135, and glutamate 140.

This sequence belongs to the calmodulin family.

In terms of biological role, may be involved in calcium-mediated signal transduction. This Drosophila melanogaster (Fruit fly) protein is Calmodulin-related protein 97A (Acam).